The following is a 359-amino-acid chain: Type-1 angiotensin II receptor (359 aa).

Residues 1 to 25 (MILNSSTEDGIKRIQDDCPKAGRHS) lie on the Extracellular side of the membrane. Asn-4 is a glycosylation site (N-linked (GlcNAc...) asparagine). Angiotensin II contacts are provided by Gln-15 and Asp-17. 2 disulfide bridges follow: Cys-18/Cys-274 and Cys-101/Cys-180. The chain crosses the membrane as a helical span at residues 26-55 (YIFVMIPTLYSIIFVVGIFGNSLVVIVIYF). At 56–61 (YMKLKT) the chain is on the cytoplasmic side. A helical membrane pass occupies residues 62–89 (VASVFLLNLALADICFLLTLPLWAVYTA). Residues 90–98 (MEYRWPFGN) lie on the Extracellular side of the membrane. A helical membrane pass occupies residues 99-125 (YLCKIASASVSFNLYASVFLLTCLSID). Topologically, residues 126-141 (RYLAIVHPMKSRLRRT) are cytoplasmic. A helical membrane pass occupies residues 142–165 (MLVAKVTCVIIWLMAGLASLPAVI). Over 166–190 (HRNVFFIENTNITVCAFHYESQNST) the chain is Extracellular. Arg-167 contacts angiotensin II. N-linked (GlcNAc...) asparagine glycosylation occurs at Asn-176. Angiotensin II is bound by residues Phe-182, His-183, and Tyr-184. The N-linked (GlcNAc...) asparagine glycan is linked to Asn-188. Residues 191 to 216 (LPIGLGLTKNILGFMFPFLIILTSYT) traverse the membrane as a helical segment. Angiotensin II is bound at residue Lys-199. At 217 to 239 (LIWKALKKAYEIQKNKPRNDDIF) the chain is on the cytoplasmic side. Residues 240-268 (KIIMAIVLFFFFSWVPHQIFTFLDVLIQL) form a helical membrane-spanning segment. Residues 269–278 (GIIHDCKISD) are Extracellular-facing. The helical transmembrane segment at 279–304 (IVDTAMPITICIAYFNNCLNPLFYGF) threads the bilayer. The Cytoplasmic segment spans residues 305–359 (LGKKFKKYFLQLLKYIPPKAKSHSTLSTKMSTLSYRPSDNVSSSAKKPVQCFEVE). Over residues 337–349 (LSYRPSDNVSSSA) the composition is skewed to polar residues. Residues 337–359 (LSYRPSDNVSSSAKKPVQCFEVE) form a disordered region. Cys-355 carries S-palmitoyl cysteine lipidation.

This sequence belongs to the G-protein coupled receptor 1 family. Interacts with MAS1. Interacts with ARRB1. Interacts with FLNA (via filamin repeat 21); increases PKA-mediated phosphorylation of FLNA. Post-translationally, C-terminal Ser or Thr residues may be phosphorylated. Expressed in liver, kidney, adrenal gland, heart and colon.

It is found in the cell membrane. Functionally, receptor for angiotensin II, a vasoconstricting peptide, which acts as a key regulator of blood pressure and sodium retention by the kidney. The activated receptor in turn couples to G-alpha proteins G(q) (GNAQ, GNA11, GNA14 or GNA15) and thus activates phospholipase C and increases the cytosolic Ca(2+) concentrations, which in turn triggers cellular responses such as stimulation of protein kinase C. The polypeptide is Type-1 angiotensin II receptor (AGTR1) (Cavia porcellus (Guinea pig)).